Here is a 246-residue protein sequence, read N- to C-terminus: DNA repair protein RecO (246 aa).

The protein belongs to the RecO family.

In terms of biological role, involved in DNA repair and RecF pathway recombination. This Methylorubrum extorquens (strain PA1) (Methylobacterium extorquens) protein is DNA repair protein RecO.